The primary structure comprises 290 residues: Probable adenylate kinase 2, chloroplastic (290 aa).

The span at M1 to T10 shows a compositional bias: low complexity. A disordered region spans residues M1–R37. The N-terminal 61 residues, M1–R61, are a transit peptide targeting the chloroplast. A83–T88 provides a ligand contact to ATP. Positions S103–V132 are NMP. Residues R109, Q130–V132, G159–R162, and Q166 contribute to the AMP site. ATP contacts are provided by residues R193, R197, and I206–Y207. The LID stretch occupies residues G196–D229. R226 and R237 together coordinate AMP.

This sequence belongs to the adenylate kinase family.

The protein localises to the plastid. Its subcellular location is the chloroplast. It catalyses the reaction AMP + ATP = 2 ADP. In terms of biological role, catalyzes the reversible transfer of the terminal phosphate group between ATP and AMP. Plays an important role in cellular energy homeostasis and in adenine nucleotide metabolism. In Oryza sativa subsp. japonica (Rice), this protein is Probable adenylate kinase 2, chloroplastic.